Reading from the N-terminus, the 131-residue chain is Small ribosomal subunit protein uS11 (131 aa).

Belongs to the universal ribosomal protein uS11 family. As to quaternary structure, part of the 30S ribosomal subunit. Interacts with proteins S7 and S18. Binds to IF-3.

Functionally, located on the platform of the 30S subunit, it bridges several disparate RNA helices of the 16S rRNA. Forms part of the Shine-Dalgarno cleft in the 70S ribosome. In Geobacter metallireducens (strain ATCC 53774 / DSM 7210 / GS-15), this protein is Small ribosomal subunit protein uS11.